Here is a 630-residue protein sequence, read N- to C-terminus: 1-deoxy-D-xylulose-5-phosphate synthase (630 aa).

Thiamine diphosphate-binding positions include His-72 and 113–115 (GHS). Residue Asp-144 participates in Mg(2+) binding. Residues 145–146 (GA), Asn-173, Tyr-284, and Glu-367 contribute to the thiamine diphosphate site. Asn-173 contacts Mg(2+).

Belongs to the transketolase family. DXPS subfamily. In terms of assembly, homodimer. Mg(2+) is required as a cofactor. The cofactor is thiamine diphosphate.

The catalysed reaction is D-glyceraldehyde 3-phosphate + pyruvate + H(+) = 1-deoxy-D-xylulose 5-phosphate + CO2. It participates in metabolic intermediate biosynthesis; 1-deoxy-D-xylulose 5-phosphate biosynthesis; 1-deoxy-D-xylulose 5-phosphate from D-glyceraldehyde 3-phosphate and pyruvate: step 1/1. Its function is as follows. Catalyzes the acyloin condensation reaction between C atoms 2 and 3 of pyruvate and glyceraldehyde 3-phosphate to yield 1-deoxy-D-xylulose-5-phosphate (DXP). The chain is 1-deoxy-D-xylulose-5-phosphate synthase from Bacillus mycoides (strain KBAB4) (Bacillus weihenstephanensis).